The sequence spans 3753 residues: Intermembrane lipid transfer protein VPS13C (3753 aa).

The region spanning Leu3 to Ser116 is the Chorein N-terminal domain. The residue at position 132 (Ser132) is a Phosphoserine. Residues Gly150–Phe164 show a composition bias toward basic residues. The interval Gly150–Glu176 is disordered. The span at Lys165 to Glu176 shows a compositional bias: basic and acidic residues. The residue at position 614 (Thr614) is a Phosphothreonine. Ser619 carries the phosphoserine modification. Thr624 is subject to Phosphothreonine. Phosphoserine is present on residues Ser737, Ser842, Ser872, and Ser874. The short motif at Glu877–Asp883 is the FFAT element. Residues Ser1979 and Ser2473 each carry the phosphoserine modification. The interval Asp2415–Ala3309 is required for late endosome/lysosome localization. The SHR-BD domain occupies Leu2766 to Gly3016. The tract at residues Glu3310 to Ser3753 is required for lipid droplet localization. Arg3519 and Arg3526 each carry omega-N-methylarginine. At Lys3538 the chain carries N6-acetyllysine. Ser3641 bears the Phosphoserine mark.

The protein belongs to the VPS13 family. In terms of tissue distribution, widely expressed.

Its subcellular location is the mitochondrion outer membrane. It localises to the lipid droplet. The protein resides in the endoplasmic reticulum membrane. The protein localises to the lysosome membrane. It is found in the late endosome membrane. Mediates the transfer of lipids between membranes at organelle contact sites. Necessary for proper mitochondrial function and maintenance of mitochondrial transmembrane potential. Involved in the regulation of PINK1/PRKN-mediated mitophagy in response to mitochondrial depolarization. This chain is Intermembrane lipid transfer protein VPS13C, found in Homo sapiens (Human).